A 270-amino-acid chain; its full sequence is Sorting nexin-11 (270 aa).

One can recognise a PX domain in the interval 16-132; it reads VITVRVQDPR…HLFLQSQLSV (117 aa). Residues Arg59, Lys85, and Arg99 each contribute to the a 1,2-diacyl-sn-glycero-3-phospho-(1D-myo-inositol-3-phosphate) site. Residues 135 to 139 form an important for membrane trafficking region; sequence IEACV. A compositionally biased stretch (basic and acidic residues) spans 168–177; sequence SSSHLAKGDQ. Residues 168-203 form a disordered region; the sequence is SSSHLAKGDQPKSCCFLPRSGRRSSPSPPPSEEKDH.

The protein belongs to the sorting nexin family. As to quaternary structure, monomer. Interacts with TRPV3; this interaction promotes TRPV3 trafficking from the cell membrane to lysosome for degradation.

The protein localises to the cell membrane. The protein resides in the endosome. It is found in the cytoplasm. Functionally, phosphoinositide-binding protein involved in protein sorting and membrane trafficking in endosomes. Regulates the levels of TRPV3 by promoting its trafficking from the cell membrane to lysosome for degradation. In Homo sapiens (Human), this protein is Sorting nexin-11 (SNX11).